The following is a 158-amino-acid chain: Glutathione peroxidase homolog BsaA (158 aa).

The active site involves Thr-36.

The protein belongs to the glutathione peroxidase family.

This is Glutathione peroxidase homolog BsaA (bsaA) from Staphylococcus epidermidis (strain ATCC 35984 / DSM 28319 / BCRC 17069 / CCUG 31568 / BM 3577 / RP62A).